The chain runs to 797 residues: MLNYQCLETDSYCGTSHIELDGIHIYIDPGSDDSLKHPEVPEQPDLILLSHSDLAHIGGLVYAYYKYDWKNAYIYATLPTINMGRMTMLDAIKSNYISDMSKADVDAVFDSIIPLRYQQPTLLLGKCSGLTITAYNAGHTLGGTLWSLIKESESVLYAVDWNHSKDKHLNGAALYSNGHILEALNRPNTLITDANNSLVSIPSRKKRDEAFIESVMSSLLKGGTVLLPVDAASRVLELCCILDNHWSASQPPLPFPILFLSPTSTKTIDYAKSMIEWMGDNIVRDFGINENLLEFRNINTITDFSQISHIGPGPKVILATALTLECGFSQRILLDLMSENSNDLILFTQRSRCPQNSLANQFIRYWERASKKKRDIPHPVGLYAEQAVKIKTKEPLEGEELRSYQELEFSKRNKDAEDTALEFRNRTILDEDLSSSSSSEDDDLDLNTEVPHVALGSSAFLMGKSFDLNLRDPAVQALHTKYKMFPYIEKRRRIDEYGEIIKHQDFSMINEPANTLELENDSDDNALSNSNGKRKWSEINDGLQQKKEEEDEDEVPSKIITDEKTIRVSCQVQFIDIEGLHDGRSLKTIIPQVNPRRLVLIHASTEEKEDMKKTCASLSAFTKDVYIPNYGEIINVSIDVNAFSLKLADDLIKNLIWTKVGNCEVSHMLAKVEISKPSEEEDKKEEVEKKDGDKERNEEKKEEKETLPVLNALTLRSDLARAPRAAPLLVGNIRLAYLRKALLDQGISAELKGEGVLLCGGAVAVRKLSGGKISVEGSLSNRFFEIRKLVYDALAVV.

2 disordered regions span residues 519–557 (ENDS…EVPS) and 677–703 (PSEE…KKEE). Positions 684–703 (KEEVEKKDGDKERNEEKKEE) are enriched in basic and acidic residues.

In terms of assembly, component of the cleavage and polyadenylation factor (CPF) complex, which is composed of cft1, cft2, ysh1, pta1, swd2, pfs2, dis2, yth1, ssu72, and fip1.

It localises to the nucleus. Its function is as follows. RNA-binding component of the cleavage and polyadenylation factor (CPF) complex, which plays a key role in polyadenylation-dependent pre-mRNA 3'-end formation and cooperates with cleavage factors including the CFIA complex and NAB4/CFIB. May be involved in poly(A)-site recognition. May be involved in the association of the CPF, CPFIA and RNA polymerase II complexes. The chain is Cleavage factor two protein 2 (cft2) from Schizosaccharomyces pombe (strain 972 / ATCC 24843) (Fission yeast).